The primary structure comprises 422 residues: Enolase (422 aa).

Residue Gln-161 participates in (2R)-2-phosphoglycerate binding. The active-site Proton donor is Glu-203. Mg(2+) contacts are provided by Asp-240, Glu-283, and Asp-310. Positions 335, 364, 365, and 386 each coordinate (2R)-2-phosphoglycerate. Lys-335 acts as the Proton acceptor in catalysis.

Belongs to the enolase family. The cofactor is Mg(2+).

Its subcellular location is the cytoplasm. It localises to the secreted. The protein localises to the cell surface. It catalyses the reaction (2R)-2-phosphoglycerate = phosphoenolpyruvate + H2O. The protein operates within carbohydrate degradation; glycolysis; pyruvate from D-glyceraldehyde 3-phosphate: step 4/5. Catalyzes the reversible conversion of 2-phosphoglycerate (2-PG) into phosphoenolpyruvate (PEP). It is essential for the degradation of carbohydrates via glycolysis. This is Enolase from Deinococcus radiodurans (strain ATCC 13939 / DSM 20539 / JCM 16871 / CCUG 27074 / LMG 4051 / NBRC 15346 / NCIMB 9279 / VKM B-1422 / R1).